A 320-amino-acid polypeptide reads, in one-letter code: ATP-dependent 6-phosphofructokinase (320 aa).

An ATP-binding site is contributed by glycine 12. ADP is bound by residues 22-26 (RGVVR) and 55-60 (RYSVSD). ATP contacts are provided by residues 73–74 (RF) and 103–106 (GDGS). Position 104 (aspartate 104) interacts with Mg(2+). 126 to 128 (TID) lines the substrate pocket. Aspartate 128 acts as the Proton acceptor in catalysis. ADP is bound at residue arginine 155. Substrate contacts are provided by residues arginine 163 and 170-172 (MGR). ADP is bound by residues 186 to 188 (GCE), lysine 212, and 214 to 216 (KKH). Substrate-binding positions include glutamate 223, arginine 244, and 250–253 (HIQR).

Belongs to the phosphofructokinase type A (PFKA) family. ATP-dependent PFK group I subfamily. Prokaryotic clade 'B1' sub-subfamily. As to quaternary structure, homotetramer. Requires Mg(2+) as cofactor.

It is found in the cytoplasm. The catalysed reaction is beta-D-fructose 6-phosphate + ATP = beta-D-fructose 1,6-bisphosphate + ADP + H(+). It functions in the pathway carbohydrate degradation; glycolysis; D-glyceraldehyde 3-phosphate and glycerone phosphate from D-glucose: step 3/4. Allosterically activated by ADP and other diphosphonucleosides, and allosterically inhibited by phosphoenolpyruvate. Its function is as follows. Catalyzes the phosphorylation of D-fructose 6-phosphate to fructose 1,6-bisphosphate by ATP, the first committing step of glycolysis. In Pectobacterium carotovorum subsp. carotovorum (strain PC1), this protein is ATP-dependent 6-phosphofructokinase.